The primary structure comprises 400 residues: Nicotinate phosphoribosyltransferase (400 aa).

His-220 bears the Phosphohistidine; by autocatalysis mark.

The protein belongs to the NAPRTase family. In terms of processing, transiently phosphorylated on a His residue during the reaction cycle. Phosphorylation strongly increases the affinity for substrates and increases the rate of nicotinate D-ribonucleotide production. Dephosphorylation regenerates the low-affinity form of the enzyme, leading to product release.

It catalyses the reaction nicotinate + 5-phospho-alpha-D-ribose 1-diphosphate + ATP + H2O = nicotinate beta-D-ribonucleotide + ADP + phosphate + diphosphate. It participates in cofactor biosynthesis; NAD(+) biosynthesis; nicotinate D-ribonucleotide from nicotinate: step 1/1. Its function is as follows. Catalyzes the synthesis of beta-nicotinate D-ribonucleotide from nicotinate and 5-phospho-D-ribose 1-phosphate at the expense of ATP. This is Nicotinate phosphoribosyltransferase from Salmonella newport (strain SL254).